A 393-amino-acid polypeptide reads, in one-letter code: Acetate kinase (393 aa).

N6 is a Mg(2+) binding site. Residue K13 participates in ATP binding. R87 is a binding site for substrate. D143 functions as the Proton donor/acceptor in the catalytic mechanism. Residues 203–207, 278–280, and 326–330 each bind ATP; these read HLGNG, DMR, and GIGEN. E380 contributes to the Mg(2+) binding site.

Belongs to the acetokinase family. In terms of assembly, homodimer. Requires Mg(2+) as cofactor. It depends on Mn(2+) as a cofactor.

It localises to the cytoplasm. The enzyme catalyses acetate + ATP = acetyl phosphate + ADP. It participates in metabolic intermediate biosynthesis; acetyl-CoA biosynthesis; acetyl-CoA from acetate: step 1/2. Functionally, catalyzes the formation of acetyl phosphate from acetate and ATP. Can also catalyze the reverse reaction. The chain is Acetate kinase from Mycoplasma mycoides subsp. mycoides SC (strain CCUG 32753 / NCTC 10114 / PG1).